The primary structure comprises 1155 residues: Polarized growth protein rax2 (1155 aa).

A signal peptide spans 1–27 (MAIYSSFWIRLYFTFRFFCYFLTSVVA). Residues 28 to 1105 (SDVSFLGDFS…KYDHIGQPRY (1078 aa)) lie on the Extracellular side of the membrane. N-linked (GlcNAc...) asparagine glycosylation is found at N44, N61, N103, N118, N124, N156, N161, N182, N190, N213, N224, N306, N391, N413, N419, N510, N519, N554, N562, N607, N630, N713, N722, N743, N769, N793, N807, N824, N840, N848, N876, N893, N899, N916, N945, N1009, N1030, and N1055. The chain crosses the membrane as a helical span at residues 1106–1126 (VVIISLGISIGVMFLIMSGSI). At 1127–1155 (VVEIIHWFFSEHVETLHDYSNFLKELKTQ) the chain is on the cytoplasmic side.

The protein belongs to the RAX2 family. As to quaternary structure, interacts with for3 and tea1.

The protein localises to the cell membrane. Its function is as follows. Controls cell polarity, through the G1 phase of mitosis, via regulation of for3 localization. Required for actin cable formation where it directs the spatial distribution of the actin cables. In Schizosaccharomyces pombe (strain 972 / ATCC 24843) (Fission yeast), this protein is Polarized growth protein rax2.